The sequence spans 1033 residues: Potassium-transporting ATPase alpha chain 1 (1033 aa).

The Cytoplasmic portion of the chain corresponds to 1-96 (MGKENYELYS…NALRPPRGTP (96 aa)). Residues Tyr6 and Tyr9 each carry the phosphotyrosine modification. The tract at residues 14-39 (GTGPGGDMAAKMSKKKAGGGGGKKKE) is disordered. The span at 25-38 (MSKKKAGGGGGKKK) shows a compositional bias: basic residues. Residue Ser26 is modified to Phosphoserine. The chain crosses the membrane as a helical span at residues 97–117 (EYVKFARQLAGGLQCLMWVAA). Topologically, residues 118–140 (AICLIAFAIQASEGDLTTDDNLY) are lumenal. The helical transmembrane segment at 141 to 161 (LALALIAVVVVTGCFGYYQEF) threads the bilayer. Residues 162-297 (KSTNIIASFK…NEKTPIAIEI (136 aa)) are Cytoplasmic-facing. A helical membrane pass occupies residues 298 to 317 (EHFVDIIAGLAILFGATFFV). Over 318-329 (VAMCIGYTFLRA) the chain is Lumenal. Residues 330–347 (MVFFMAIVVAYVPEGLLA) form a helical membrane-spanning segment. K(+) is bound by residues Val338, Ala339, Val341, and Glu343. The Cytoplasmic segment spans residues 348-781 (TVTVCLSLTA…EQGRLIFDNL (434 aa)). Asp385 functions as the 4-aspartylphosphate intermediate in the catalytic mechanism. Residues Asp385 and Thr387 each coordinate Mg(2+). 2 positions are modified to phosphoserine: Ser461 and Ser599. Mg(2+) contacts are provided by Asp726 and Asp730. Residues 782–801 (KKSIAYTLTKNIPELTPYLI) traverse the membrane as a helical segment. Glu795 lines the K(+) pocket. The Lumenal segment spans residues 802 to 811 (YITVSVPLPL). A helical transmembrane segment spans residues 812 to 832 (GCITILFIELCTDIFPSVSLA). Residue Glu820 coordinates K(+). Residues 833–852 (YEKAESDIMHLRPRNPRRDR) lie on the Cytoplasmic side of the membrane. Ser838 is modified (phosphoserine). Residues 853–875 (LVNEPLAAYSYFQIGAIQSFAGF) form a helical membrane-spanning segment. Topologically, residues 876–927 (ADYFTAMAQEGWFPLLCVGLRPQWEDHHLQDLQDSYGQEWTFGQRLYQQYTC) are lumenal. A helical membrane pass occupies residues 928–947 (YTVFFISIEMCQIADVLIRK). Residues 948–961 (TRRLSAFQQGFFRN) lie on the Cytoplasmic side of the membrane. Ser952 is modified (phosphoserine; by PKA). The helical transmembrane segment at 962 to 980 (RILVIAIVFQVCIGCFLCY) threads the bilayer. Residues 981-995 (CPGMPNIFNFMPIRF) lie on the Lumenal side of the membrane. A helical membrane pass occupies residues 996–1016 (QWWLVPMPFGLLIFVYDEIRK). Topologically, residues 1017 to 1033 (LGVRCCPGSWWDQELYY) are cytoplasmic.

This sequence belongs to the cation transport ATPase (P-type) (TC 3.A.3) family. Type IIC subfamily. In terms of assembly, the gastric H(+)/K(+) ATPase pump is composed of the catalytic alpha subunit ATP4A and the regulatory beta subunit ATP4B. Interacts (via the P-domain) with ATP4B (via N-terminus); this interaction stabilizes the lumenal-open E2 conformation state and prevents the reverse reaction of the transport cycle.

It localises to the apical cell membrane. The catalysed reaction is K(+)(out) + ATP + H2O + H(+)(in) = K(+)(in) + ADP + phosphate + 2 H(+)(out). In terms of biological role, the catalytic subunit of the gastric H(+)/K(+) ATPase pump which transports H(+) ions in exchange for K(+) ions across the apical membrane of parietal cells. Uses ATP as an energy source to pump H(+) ions to the gastric lumen while transporting K(+) ion from the lumen into the cell. Remarkably generates a million-fold proton gradient across the gastric parietal cell membrane, acidifying the gastric juice down to pH 1. Within a transport cycle, the transfer of a H(+) ion across the membrane is coupled to ATP hydrolysis and is associated with a transient phosphorylation that shifts the pump conformation from inward-facing (E1) to outward-facing state (E2). The release of the H(+) ion in the stomach lumen is followed by binding of K(+) ion converting the pump conformation back to the E1 state. The sequence is that of Potassium-transporting ATPase alpha chain 1 (Atp4a) from Rattus norvegicus (Rat).